We begin with the raw amino-acid sequence, 196 residues long: Endoribonuclease YbeY (196 aa).

Residues His-120, His-124, and His-130 each coordinate Zn(2+).

The protein belongs to the endoribonuclease YbeY family. Zn(2+) is required as a cofactor.

Its subcellular location is the cytoplasm. In terms of biological role, single strand-specific metallo-endoribonuclease involved in late-stage 70S ribosome quality control and in maturation of the 3' terminus of the 16S rRNA. The sequence is that of Endoribonuclease YbeY from Corynebacterium diphtheriae (strain ATCC 700971 / NCTC 13129 / Biotype gravis).